The following is a 326-amino-acid chain: Flotillin-like protein FloA (326 aa).

A helical transmembrane segment spans residues 3–23; sequence FTTIVVILLVIACIVVLFFIG.

The protein belongs to the flotillin-like FloA family. As to quaternary structure, homooligomerizes.

It is found in the cell membrane. It localises to the membrane raft. In terms of biological role, found in functional membrane microdomains (FMM) that may be equivalent to eukaryotic membrane rafts. FMMs are highly dynamic and increase in number as cells age. Flotillins are thought to be important factors in membrane fluidity. The protein is Flotillin-like protein FloA of Desulforapulum autotrophicum (strain ATCC 43914 / DSM 3382 / VKM B-1955 / HRM2) (Desulfobacterium autotrophicum).